Here is a 465-residue protein sequence, read N- to C-terminus: Pancreatic triacylglycerol lipase (465 aa).

The first 16 residues, 1–16, serve as a signal peptide directing secretion; the sequence is MLLLWILSLFLETVAG. 2 cysteine pairs are disulfide-bonded: Cys20-Cys26 and Cys107-Cys118. The active-site Nucleophile is Ser169. The active-site Charge relay system is Asp193. Ca(2+)-binding residues include Glu204, Arg207, Asp209, and Asp212. A disulfide bridge links Cys254 with Cys278. His280 serves as the catalytic Charge relay system. 2 disulfide bridges follow: Cys302–Cys313 and Cys316–Cys321. N-linked (GlcNAc...) asparagine glycans are attached at residues Asn351, Asn398, and Asn425. The 111-residue stretch at 355–465 folds into the PLAT domain; sequence WRYRIAVTLS…EEVLLTLQPC (111 aa). The cysteines at positions 449 and 465 are disulfide-linked.

The protein belongs to the AB hydrolase superfamily. Lipase family. Forms a 1:1 stoichiometric complex with (pro)colipase/CLPS.

It is found in the secreted. The catalysed reaction is a triacylglycerol + H2O = a diacylglycerol + a fatty acid + H(+). The enzyme catalyses 1,2,3-tributanoylglycerol + H2O = dibutanoylglycerol + butanoate + H(+). It catalyses the reaction 1,2,3-tri-(9Z-octadecenoyl)-glycerol + H2O = di-(9Z)-octadecenoylglycerol + (9Z)-octadecenoate + H(+). It carries out the reaction all-trans-retinyl hexadecanoate + H2O = all-trans-retinol + hexadecanoate + H(+). The catalysed reaction is 1,2-di-(9Z-octadecenoyl)-glycerol + H2O = (9Z-octadecenoyl)-glycerol + (9Z)-octadecenoate + H(+). Inhibited by bile salts, is reactivated by (pro)colipase/CLPS. Functionally, plays an important role in fat metabolism. It preferentially splits the esters of long-chain fatty acids at positions 1 and 3, producing mainly 2-monoacylglycerol and free fatty acids, and shows considerably higher activity against insoluble emulsified substrates than against soluble ones. The polypeptide is Pancreatic triacylglycerol lipase (PNLIP) (Cavia porcellus (Guinea pig)).